A 452-amino-acid chain; its full sequence is Probable phosphoglucosamine mutase (452 aa).

Serine 96 acts as the Phosphoserine intermediate in catalysis. The Mg(2+) site is built by serine 96, aspartate 233, aspartate 235, and aspartate 237. Phosphoserine is present on serine 96.

It belongs to the phosphohexose mutase family. Mg(2+) serves as cofactor. Post-translationally, activated by phosphorylation.

It catalyses the reaction alpha-D-glucosamine 1-phosphate = D-glucosamine 6-phosphate. In terms of biological role, catalyzes the conversion of glucosamine-6-phosphate to glucosamine-1-phosphate. This is Probable phosphoglucosamine mutase from Pyrococcus furiosus (strain ATCC 43587 / DSM 3638 / JCM 8422 / Vc1).